Consider the following 353-residue polypeptide: MISENAPSSPSSKPLLRALRGEAVWPPPVWLMRQAGRYLPEFRAMRDRADFLTRCMTPDMATELTIQPIRRYGMDGAILFSDILILPWAMGQSLEFIDGRGPVLGAIRSEADLARLDPKRVQDAVAPVRETLSRLTKELPDVTTLLGFAGSPFTVSCYMVEGGGSRDFAETRRMMQTNPALFDRLIDTLTSSTAEMLCGQIEAGAEAVMLFDSWAGILPPSAFRRYVIEPTRQIVEYIRARHPKTPIIGFPRLGGIMVREYAQKTGVNTLALDTVADPAQISELVSEVRPGLTLQGNMDPMILFSGGETMIREAQAIRDAMRGKPHVFNLGHGVMQHTPPENVAALVEAVRAV.

Substrate-binding positions include 33–37, Asp82, Tyr158, Ser213, and His332; that span reads RQAGR.

Belongs to the uroporphyrinogen decarboxylase family. In terms of assembly, homodimer.

Its subcellular location is the cytoplasm. It carries out the reaction uroporphyrinogen III + 4 H(+) = coproporphyrinogen III + 4 CO2. The protein operates within porphyrin-containing compound metabolism; protoporphyrin-IX biosynthesis; coproporphyrinogen-III from 5-aminolevulinate: step 4/4. In terms of biological role, catalyzes the decarboxylation of four acetate groups of uroporphyrinogen-III to yield coproporphyrinogen-III. In Gluconobacter oxydans (strain 621H) (Gluconobacter suboxydans), this protein is Uroporphyrinogen decarboxylase.